Consider the following 416-residue polypeptide: Caspase-9 (416 aa).

The region spanning 1–92 (MDEADRRLLR…DMLASFLRTN (92 aa)) is the CARD domain. Thr-125 bears the Phosphothreonine; by MAPK1 mark. A Phosphotyrosine; by ABL1 modification is found at Tyr-153. Catalysis depends on residues His-237 and Cys-287. The segment at 294–320 (HGFEVASTSPEDESPGSNPEPDATPFQ) is disordered. Phosphoserine occurs at positions 302, 307, and 310. Positions 316–330 (ATPFQEGLRTFDQLD) are excised as a propeptide. Arg-355 is modified ((Microbial infection) ADP-riboxanated arginine).

This sequence belongs to the peptidase C14A family. Heterotetramer that consists of two anti-parallel arranged heterodimers, each one formed by a 35 kDa (p35) and a 10 kDa (p10) subunit. Caspase-9 and APAF1 bind to each other via their respective NH2-terminal CED-3 homologous domains in the presence of cytochrome C and ATP. Interacts (inactive form) with EFHD2. Interacts with HAX1. Interacts with BIRC2/c-IAP1, XIAP/BIRC4, BIRC5/survivin, BIRC6/bruce and BIRC7/livin. Interacts with ABL1 (via SH3 domain); the interaction is direct and increases in the response of cells to genotoxic stress and ABL1/c-Abl activation. Interacts with BCL2L10. Interacts with NleF from pathogenic E.coli. Post-translationally, cleavages at Asp-315 by granzyme B and at Asp-330 by caspase-3 generate the two active subunits. Caspase-8 and -10 can also be involved in these processing events. In terms of processing, phosphorylated at Thr-125 by MAPK1/ERK2. Phosphorylation at Thr-125 is sufficient to block caspase-9 processing and subsequent caspase-3 activation. Phosphorylation on Tyr-153 by ABL1/c-Abl; occurs in the response of cells to DNA damage. (Microbial infection) ADP-riboxanation by C.violaceum CopC blocks CASP9 processing, preventing CASP9 activation and ability to mediate intrinsic apoptosis. Post-translationally, ubiquitinated by BIRC6; this activity is inhibited by DIABLO/SMAC. Ubiquitous, with highest expression in the heart, moderate expression in liver, skeletal muscle, and pancreas. Low levels in all other tissues. Within the heart, specifically expressed in myocytes.

The enzyme catalyses Strict requirement for an Asp residue at position P1 and with a marked preference for His at position P2. It has a preferred cleavage sequence of Leu-Gly-His-Asp-|-Xaa.. Its activity is regulated as follows. Inhibited by the effector protein NleF that is produced by pathogenic E.coli; this inhibits apoptosis. Inhibited by BIRC6; following inhibition of BIRC6-caspase binding by DIABLO/SMAC, BIRC6 is subjected to caspase cleavage, leading to an increase in active caspases. In terms of biological role, involved in the activation cascade of caspases responsible for apoptosis execution. Binding of caspase-9 to Apaf-1 leads to activation of the protease which then cleaves and activates effector caspases caspase-3 (CASP3) or caspase-7 (CASP7). Promotes DNA damage-induced apoptosis in a ABL1/c-Abl-dependent manner. Proteolytically cleaves poly(ADP-ribose) polymerase (PARP). Cleaves BIRC6 following inhibition of BIRC6-caspase binding by DIABLO/SMAC. Functionally, lacks activity is an dominant-negative inhibitor of caspase-9. This is Caspase-9 (CASP9) from Homo sapiens (Human).